Consider the following 633-residue polypeptide: 1-deoxy-D-xylulose-5-phosphate synthase (633 aa).

Residues H72 and 113–115 each bind thiamine diphosphate; that span reads GHS. Position 144 (D144) interacts with Mg(2+). Thiamine diphosphate is bound by residues 145–146, N173, Y284, and E367; that span reads GA. N173 is a Mg(2+) binding site.

The protein belongs to the transketolase family. DXPS subfamily. Homodimer. Requires Mg(2+) as cofactor. The cofactor is thiamine diphosphate.

It catalyses the reaction D-glyceraldehyde 3-phosphate + pyruvate + H(+) = 1-deoxy-D-xylulose 5-phosphate + CO2. It functions in the pathway metabolic intermediate biosynthesis; 1-deoxy-D-xylulose 5-phosphate biosynthesis; 1-deoxy-D-xylulose 5-phosphate from D-glyceraldehyde 3-phosphate and pyruvate: step 1/1. Its function is as follows. Catalyzes the acyloin condensation reaction between C atoms 2 and 3 of pyruvate and glyceraldehyde 3-phosphate to yield 1-deoxy-D-xylulose-5-phosphate (DXP). This Bacillus licheniformis (strain ATCC 14580 / DSM 13 / JCM 2505 / CCUG 7422 / NBRC 12200 / NCIMB 9375 / NCTC 10341 / NRRL NRS-1264 / Gibson 46) protein is 1-deoxy-D-xylulose-5-phosphate synthase.